Consider the following 33-residue polypeptide: Brevinin-2Ea (33 aa).

A disulfide bond links Cys-27 and Cys-33.

Belongs to the frog skin active peptide (FSAP) family. Brevinin subfamily. Expressed by the skin glands.

Its subcellular location is the secreted. In terms of biological role, shows antibacterial activity against representative Gram-negative and Gram-positive bacterial species, and hemolytic activity. In Pelophylax lessonae (Pool frog), this protein is Brevinin-2Ea.